Here is an 89-residue protein sequence, read N- to C-terminus: MATELEKALSNVIEVYHNYSGIKGNHHALYRDDFRKMVTTECPQFVQNKNTESLFKELDVNSDNAINFEEFLVLVIRVGVAAHKDSHKE.

Ala-2 carries the post-translational modification N-acetylalanine. 2 consecutive EF-hand domains span residues 13 to 48 and 46 to 81; these read IEVYHNYSGIKGNHHALYRDDFRKMVTTECPQFVQN and VQNKNTESLFKELDVNSDNAINFEEFLVLVIRVGVA. 2 residues coordinate Zn(2+): His-17 and His-27. Position 33 (Asp-33) interacts with Ca(2+). The residue at position 42 (Cys-42) is an S-nitrosocysteine. Ca(2+) contacts are provided by Asp-59, Asn-61, Asp-63, and Glu-70. His-83 is a binding site for Zn(2+).

This sequence belongs to the S-100 family. In terms of assembly, homodimer. Preferentially exists as a heterodimer or heterotetramer with S100A9 known as calprotectin (S100A8/A9). S100A8 interacts with AGER, ATP2A2 and with the heterodimeric complex formed by TLR4 and LY96. Calprotectin (S100A8/9) interacts with CEACAM3 and tubulin filaments in a calcium-dependent manner. Heterotetrameric calprotectin (S100A8/A9) interacts with ANXA6 and associates with tubulin filaments in activated monocytes. S100A8 and calprotectin (S100A8/9) interact with NCF2/P67PHOX, RAC1 and RAC2. Calprotectin (S100A8/9) interacts with CYBA and CYBB. Calprotectin (S100A8/9) interacts with NOS2 to form the iNOS-S100A8/A9 transnitrosylase complex. Calprotectin (S100A8/9) interacts with CD69.

It localises to the secreted. Its subcellular location is the cytoplasm. The protein localises to the cytoskeleton. It is found in the cell membrane. Functionally, S100A8 is a calcium- and zinc-binding protein which plays a prominent role in the regulation of inflammatory processes and immune response. It can induce neutrophil chemotaxis and adhesion. Predominantly found as calprotectin (S100A8/A9) which has a wide plethora of intra- and extracellular functions. The intracellular functions include: facilitating leukocyte arachidonic acid trafficking and metabolism, modulation of the tubulin-dependent cytoskeleton during migration of phagocytes and activation of the neutrophilic NADPH-oxidase. Also participates in regulatory T-cell differentiation together with CD69. Activates NADPH-oxidase by facilitating the enzyme complex assembly at the cell membrane, transferring arachidonic acid, an essential cofactor, to the enzyme complex and S100A8 contributes to the enzyme assembly by directly binding to NCF2/P67PHOX. The extracellular functions involve pro-inflammatory, antimicrobial, oxidant-scavenging and apoptosis-inducing activities. Its pro-inflammatory activity includes recruitment of leukocytes, promotion of cytokine and chemokine production, and regulation of leukocyte adhesion and migration. Acts as an alarmin or a danger associated molecular pattern (DAMP) molecule and stimulates innate immune cells via binding to pattern recognition receptors such as Toll-like receptor 4 (TLR4) and receptor for advanced glycation endproducts (AGER). Binding to TLR4 and AGER activates the MAP-kinase and NF-kappa-B signaling pathways resulting in the amplification of the pro-inflammatory cascade. Has antimicrobial activity towards bacteria and fungi and exerts its antimicrobial activity probably via chelation of Zn(2+) which is essential for microbial growth. Can induce cell death via autophagy and apoptosis and this occurs through the cross-talk of mitochondria and lysosomes via reactive oxygen species (ROS) and the process involves BNIP3. Can regulate neutrophil number and apoptosis by an anti-apoptotic effect; regulates cell survival via ITGAM/ITGB and TLR4 and a signaling mechanism involving MEK-ERK. Its role as an oxidant scavenger has a protective role in preventing exaggerated tissue damage by scavenging oxidants. The iNOS-S100A8/A9 transnitrosylase complex is proposed to direct selective inflammatory stimulus-dependent S-nitrosylation of multiple targets such as GAPDH, ANXA5, EZR, MSN and VIM by recognizing a [IL]-x-C-x-x-[DE] motif; S100A8 seems to contribute to S-nitrosylation site selectivity. In Rattus norvegicus (Rat), this protein is Protein S100-A8 (S100a8).